Here is a 179-residue protein sequence, read N- to C-terminus: Repressor of phase 1 flagellin gene (179 aa).

Its function is as follows. Transcriptional repressor of the FliC phase-1 flagellin. The chain is Repressor of phase 1 flagellin gene (fljA) from Salmonella abortus-equi.